The following is a 159-amino-acid chain: Small ribosomal subunit protein uS7c (159 aa).

A disordered region spans residues 137 to 159 (HAIRKKEETHKMAESNRAXAHYR). The segment covering 141-150 (KKEETHKMAE) has biased composition (basic and acidic residues).

It belongs to the universal ribosomal protein uS7 family. Part of the 30S ribosomal subunit.

The protein resides in the plastid. It localises to the chloroplast. Its function is as follows. One of the primary rRNA binding proteins, it binds directly to 16S rRNA where it nucleates assembly of the head domain of the 30S subunit. In Sciadopitys verticillata (Japanese umbrella-pine), this protein is Small ribosomal subunit protein uS7c (rps7).